Consider the following 347-residue polypeptide: L-threonine 3-dehydrogenase (347 aa).

C43 contacts Zn(2+). Active-site charge relay system residues include T45 and H48. Residues H68, E69, C98, C101, C104, and C112 each contribute to the Zn(2+) site. Residues I180, D200, R205, 267–269 (LSL), and 292–293 (IT) each bind NAD(+).

It belongs to the zinc-containing alcohol dehydrogenase family. As to quaternary structure, homotetramer. The cofactor is Zn(2+).

It localises to the cytoplasm. The catalysed reaction is L-threonine + NAD(+) = (2S)-2-amino-3-oxobutanoate + NADH + H(+). It participates in amino-acid degradation; L-threonine degradation via oxydo-reductase pathway; glycine from L-threonine: step 1/2. Catalyzes the NAD(+)-dependent oxidation of L-threonine to 2-amino-3-ketobutyrate. This chain is L-threonine 3-dehydrogenase, found in Bacillus subtilis (strain 168).